A 106-amino-acid polypeptide reads, in one-letter code: Protein S40-3 (106 aa).

Positions 1-65 are disordered; it reads MSEEFQESEV…TEEEGEMTPP (65 aa). A compositionally biased stretch (basic and acidic residues) spans 16-41; it reads SFTRKDNKISHNNENYERKSTEKDKI.

The protein belongs to the senescence regulator S40 family.

It localises to the nucleus. Its function is as follows. Regulates senescence either by modulating WRKY53 or by activating SAG12. Affects the natural variation of cyst nematodes sex ratio and susceptibility to parasitic nematodes, depending on single nucleotide polymorphism (SNPs) between cultivars. The sequence is that of Protein S40-3 from Arabidopsis thaliana (Mouse-ear cress).